Reading from the N-terminus, the 486-residue chain is MIINLQQLTALLPLLIIMLTVITVILSISYNRNHFFVAVFSILGLIFALCSLYFLIEIIPINVSILFHFNSNAILYIGMILISSICTCIFSYPWLLKYPFNKEEFYLLVIISTLGAISLTISHHMASFFINIELISLPMFGLIAYSRYQKYSLESSLKYIILSGVSSSFLLFGIAWVYSISGGLDFLSIHKSFNFASEKEILVVLFGISMILLSLFFKLSIVPFHLWTPDIYQGSPTSVLSFFSTAGKISVFSVLLNFLSYFSNSDNKVIYFILSLIIILSILVGNLMALFQKDIKRFLGYTSISQIGYLLIVLLVSHKNYSFSLEASAIYLCGYLFSNIACLGIVNLISTSHINNNASSINSYRGLFWSHPLLSSVLTLVLISSAGIPMTLGFIGKFYILSIVMIEHLWLIGFAFLIGSLLGLYCYLRIILNLYLHPSKLFKRDLNIPLNWVYTPSGIVICISGIILLALGIYPNPLIGLIKCTI.

14 consecutive transmembrane segments (helical) span residues 8–28, 36–56, 74–94, 104–124, 125–145, 160–180, 201–221, 239–259, 269–289, 298–318, 329–349, 376–396, 410–432, and 459–479; these read LTAL…ILSI, FVAV…YFLI, ILYI…SYPW, EFYL…ISHH, MASF…LIAY, IILS…VYSI, ILVV…KLSI, VLSF…LNFL, VIYF…NLMA, FLGY…LVSH, AIYL…VNLI, SVLT…GFIG, WLIG…RIIL, and IVIC…NPLI.

Belongs to the complex I subunit 2 family. NDH-1 is composed of 13 different subunits. Subunits NuoA, H, J, K, L, M, N constitute the membrane sector of the complex.

The protein localises to the cell membrane. It catalyses the reaction a quinone + NADH + 5 H(+)(in) = a quinol + NAD(+) + 4 H(+)(out). NDH-1 shuttles electrons from NADH, via FMN and iron-sulfur (Fe-S) centers, to quinones in the respiratory chain. The immediate electron acceptor for the enzyme in this species is believed to be ubiquinone. Couples the redox reaction to proton translocation (for every two electrons transferred, four hydrogen ions are translocated across the cytoplasmic membrane), and thus conserves the redox energy in a proton gradient. The sequence is that of NADH-quinone oxidoreductase subunit N from Buchnera aphidicola subsp. Acyrthosiphon pisum (strain APS) (Acyrthosiphon pisum symbiotic bacterium).